Reading from the N-terminus, the 274-residue chain is 2,3,4,5-tetrahydropyridine-2,6-dicarboxylate N-succinyltransferase (274 aa).

Residues Arg105 and Asp142 each coordinate substrate.

The protein belongs to the transferase hexapeptide repeat family. Homotrimer.

Its subcellular location is the cytoplasm. The catalysed reaction is (S)-2,3,4,5-tetrahydrodipicolinate + succinyl-CoA + H2O = (S)-2-succinylamino-6-oxoheptanedioate + CoA. It functions in the pathway amino-acid biosynthesis; L-lysine biosynthesis via DAP pathway; LL-2,6-diaminopimelate from (S)-tetrahydrodipicolinate (succinylase route): step 1/3. The chain is 2,3,4,5-tetrahydropyridine-2,6-dicarboxylate N-succinyltransferase from Methylobacillus flagellatus (strain ATCC 51484 / DSM 6875 / VKM B-1610 / KT).